We begin with the raw amino-acid sequence, 437 residues long: Eukaryotic peptide chain release factor subunit 1 (437 aa).

At Q182 the chain carries N5-methylglutamine. K331 participates in a covalent cross-link: Glycyl lysine isopeptide (Lys-Gly) (interchain with G-Cter in ubiquitin). S421 is modified (phosphoserine).

The protein belongs to the eukaryotic release factor 1 family. As to quaternary structure, component of the eRF1-eRF3-GTP ternary complex, composed of SUP45/eRF1, SUP35/eRF3 and GTP. Interacts with TPA1. N5-methylated on Gln-182 by MTQ2.

The protein localises to the cytoplasm. Its function is as follows. Component of the eRF1-eRF3-GTP ternary complex, a ternary complex that mediates translation termination in response to the termination codons. The eRF1-eRF3-GTP complex binds to a stop codon in the ribosomal A-site. SUP45/eRF1 is responsible for stop codon recognition and inducing hydrolysis of peptidyl-tRNA. Following GTP hydrolysis by SUP35/eRF3, SUP35/eRF3 dissociates, permitting SUP45/eRF1 to accommodate fully in the A-site and mediate hydrolysis of peptidyl-tRNA. In Saccharomyces cerevisiae (strain ATCC 204508 / S288c) (Baker's yeast), this protein is Eukaryotic peptide chain release factor subunit 1 (SUP45).